The sequence spans 97 residues: Large ribosomal subunit protein uL23 (97 aa).

Belongs to the universal ribosomal protein uL23 family. As to quaternary structure, part of the 50S ribosomal subunit. Contacts protein L29, and trigger factor when it is bound to the ribosome.

Functionally, one of the early assembly proteins it binds 23S rRNA. One of the proteins that surrounds the polypeptide exit tunnel on the outside of the ribosome. Forms the main docking site for trigger factor binding to the ribosome. This is Large ribosomal subunit protein uL23 from Anaeromyxobacter sp. (strain Fw109-5).